Consider the following 76-residue polypeptide: uncharacterized protein (76 aa).

A run of 2 helical transmembrane segments spans residues 9–29 and 45–65; these read AIGI…LQAV and LLMI…FLDY.

The protein localises to the cell membrane. This is an uncharacterized protein from Bacillus subtilis (strain 168).